We begin with the raw amino-acid sequence, 467 residues long: Glutamate--tRNA ligase (467 aa).

The short motif at 9–19 is the 'HIGH' region element; the sequence is PSPTGYLHIGG. The 'KMSKS' region signature appears at 237–241; it reads KLSKR. Lys-240 serves as a coordination point for ATP.

It belongs to the class-I aminoacyl-tRNA synthetase family. Glutamate--tRNA ligase type 1 subfamily. In terms of assembly, monomer.

The protein localises to the cytoplasm. It catalyses the reaction tRNA(Glu) + L-glutamate + ATP = L-glutamyl-tRNA(Glu) + AMP + diphosphate. Its function is as follows. Catalyzes the attachment of glutamate to tRNA(Glu) in a two-step reaction: glutamate is first activated by ATP to form Glu-AMP and then transferred to the acceptor end of tRNA(Glu). This chain is Glutamate--tRNA ligase, found in Xanthomonas campestris pv. campestris (strain B100).